The sequence spans 245 residues: DNA repair protein RecO (245 aa).

Belongs to the RecO family.

Involved in DNA repair and RecF pathway recombination. This Pectobacterium atrosepticum (strain SCRI 1043 / ATCC BAA-672) (Erwinia carotovora subsp. atroseptica) protein is DNA repair protein RecO.